The sequence spans 759 residues: TY1 enhancer activator (759 aa).

Residues M1 to G61 form a disordered region. At T22 the chain carries Phosphothreonine. A compositionally biased stretch (low complexity) spans S30–S51. The zn(2)-C6 fungal-type DNA-binding region spans C70–C96. A disordered region spans residues L229 to K254. The 9aaTAD signature appears at D744 to G752. T755 carries the post-translational modification Phosphothreonine.

Its subcellular location is the nucleus. In terms of biological role, TY1 element enhancer binding protein. Binds to the DNA sequence 5'-TCGGTGGTATTATTCCGA-3'. The protein is TY1 enhancer activator (TEA1) of Saccharomyces cerevisiae (strain ATCC 204508 / S288c) (Baker's yeast).